The chain runs to 211 residues: ATP phosphoribosyltransferase (211 aa).

It belongs to the ATP phosphoribosyltransferase family. Short subfamily. In terms of assembly, heteromultimer composed of HisG and HisZ subunits.

Its subcellular location is the cytoplasm. It catalyses the reaction 1-(5-phospho-beta-D-ribosyl)-ATP + diphosphate = 5-phospho-alpha-D-ribose 1-diphosphate + ATP. It functions in the pathway amino-acid biosynthesis; L-histidine biosynthesis; L-histidine from 5-phospho-alpha-D-ribose 1-diphosphate: step 1/9. In terms of biological role, catalyzes the condensation of ATP and 5-phosphoribose 1-diphosphate to form N'-(5'-phosphoribosyl)-ATP (PR-ATP). Has a crucial role in the pathway because the rate of histidine biosynthesis seems to be controlled primarily by regulation of HisG enzymatic activity. The protein is ATP phosphoribosyltransferase of Pseudomonas paraeruginosa (strain DSM 24068 / PA7) (Pseudomonas aeruginosa (strain PA7)).